A 528-amino-acid polypeptide reads, in one-letter code: Benzoylformate decarboxylase (528 aa).

Glutamine 117 and leucine 118 together coordinate Mg(2+). The thiamine pyrophosphate binding stretch occupies residues 377–460; sequence TSTVTAFWQR…IILKNGTYGA (84 aa). Positions 428, 455, and 457 each coordinate Ca(2+).

This sequence belongs to the TPP enzyme family. In terms of assembly, homotetramer. The cofactor is Ca(2+). Requires thiamine diphosphate as cofactor. It depends on Mg(2+) as a cofactor.

It carries out the reaction phenylglyoxylate + H(+) = benzaldehyde + CO2. Its pathway is aromatic compound metabolism; (R)-mandelate degradation; benzoate from (R)-mandelate: step 3/4. The sequence is that of Benzoylformate decarboxylase (mdlC) from Pseudomonas aeruginosa (strain ATCC 15692 / DSM 22644 / CIP 104116 / JCM 14847 / LMG 12228 / 1C / PRS 101 / PAO1).